Reading from the N-terminus, the 276-residue chain is MRAPHLHLSAASGARALAKLLPLLMAQLWAAEAALLPQNDTRLDPEAYGSPCARGSQPWQVSLFNGLSFHCAGVLVDQSWVLTAAHCGNKPLWARVGDDHLLLLQGEQLRRTTRSVVHPKYHQGSGPILPRRTDEHDLMLLKLARPVVLGPRVRALQLPYRCAQPGDQCQVAGWGTTAARRVKYNKGLTCSSITILSPKECEVFYPGVVTNNMICAGLDRGQDPCQSDSGGPLVCDETLQGILSWGVYPCGSAQHPAVYTQICKYMSWINKVIRSN.

The first 30 residues, 1 to 30 (MRAPHLHLSAASGARALAKLLPLLMAQLWA), serve as a signal peptide directing secretion. An N-linked (GlcNAc...) asparagine glycan is attached at Asn39. The Peptidase S1 domain maps to 47–274 (AYGSPCARGS…YMSWINKVIR (228 aa)). 5 disulfides stabilise this stretch: Cys52/Cys162, Cys71/Cys87, Cys169/Cys235, Cys201/Cys215, and Cys225/Cys250. Active-site charge relay system residues include His86 and Asp137. Ser229 acts as the Charge relay system in catalysis.

Belongs to the peptidase S1 family. Kallikrein subfamily. Expressed in breast, ovary and prostate.

Its subcellular location is the secreted. Has a tumor-suppressor role for NES1 in breast and prostate cancer. This Homo sapiens (Human) protein is Kallikrein-10 (KLK10).